We begin with the raw amino-acid sequence, 298 residues long: Cyanophycinase (298 aa).

Active-site charge relay system residues include S155, E173, and H197.

The protein belongs to the peptidase S51 family.

The catalysed reaction is [L-4-(L-arginin-2-N-yl)aspartate](n) + H2O = [L-4-(L-arginin-2-N-yl)aspartate](n-1) + L-4-(L-arginin-2-N-yl)aspartate. Its function is as follows. Exopeptidase that catalyzes the hydrolytic cleavage of multi-L-arginyl-poly-L-aspartic acid (cyanophycin; a water-insoluble reserve polymer) into aspartate-arginine dipeptides. This is Cyanophycinase (cphB) from Nostoc sp. (strain PCC 7120 / SAG 25.82 / UTEX 2576).